The primary structure comprises 1063 residues: ATP-dependent helicase hrq1 (1063 aa).

Positions 224-243 (TQSRKNQPVPPDSPSIPNDS) are disordered. The Helicase ATP-binding domain occupies 320–503 (INHLWNGFHV…KIFGVDNIKL (184 aa)). 333–340 (TSTSSGKS) contributes to the ATP binding site. The DEAH box motif lies at 444 to 447 (DEAH). One can recognise a Helicase C-terminal domain in the interval 539 to 717 (EASKLLIKFA…ELPINIRSDE (179 aa)).

Belongs to the helicase family. HRQ1 subfamily. As to quaternary structure, forms heptamer rings. Interacts with rhp14. Mg(2+) serves as cofactor.

The protein resides in the nucleus. The enzyme catalyses Couples ATP hydrolysis with the unwinding of duplex DNA by translocating in the 3'-5' direction.. It carries out the reaction ATP + H2O = ADP + phosphate + H(+). Its function is as follows. Helicase with 3'-5' helicase activity involved in genome stability. Functions in the nucleotide excision repair (NER) pathway and plays a critical role in DNA interstrand cross-link repair. Unwinds relatively long duplex DNA up to 120-bp and requires a long 3'-tail of at least 70 nucleotides for efficient unwinding of duplex DNA. Shows both processive helicase and DNA strand annealing activities. Affects telomere length by a non-catalytic mechanism, probably through inhibiting telomerase by competing with it for ssDNA binding. This Schizosaccharomyces pombe (strain 972 / ATCC 24843) (Fission yeast) protein is ATP-dependent helicase hrq1.